A 520-amino-acid chain; its full sequence is 3-phosphoshikimate 1-carboxyvinyltransferase, chloroplastic (520 aa).

A chloroplast-targeting transit peptide spans 1 to 76 (MAQISSMAQG…RISASVATAE (76 aa)). 3-phosphoshikimate-binding residues include Lys99, Ser100, and Arg104. Lys99 serves as a coordination point for phosphoenolpyruvate. Gly177 and Arg207 together coordinate phosphoenolpyruvate. Residues Ser254, Ser255, Gln256, Ser282, Asp407, and Lys434 each coordinate 3-phosphoshikimate. Residue Gln256 coordinates phosphoenolpyruvate. Asp407 serves as the catalytic Proton acceptor. Residues Arg438, Arg480, and Lys505 each coordinate phosphoenolpyruvate.

Belongs to the EPSP synthase family.

Its subcellular location is the plastid. The protein localises to the chloroplast. It catalyses the reaction 3-phosphoshikimate + phosphoenolpyruvate = 5-O-(1-carboxyvinyl)-3-phosphoshikimate + phosphate. It functions in the pathway metabolic intermediate biosynthesis; chorismate biosynthesis; chorismate from D-erythrose 4-phosphate and phosphoenolpyruvate: step 6/7. Its function is as follows. Catalyzes the transfer of the enolpyruvyl moiety of phosphoenolpyruvate (PEP) to the 5-hydroxyl of shikimate-3-phosphate (S3P) to produce enolpyruvyl shikimate-3-phosphate and inorganic phosphate. This is 3-phosphoshikimate 1-carboxyvinyltransferase, chloroplastic from Solanum lycopersicum (Tomato).